Consider the following 548-residue polypeptide: Sulochrin halogenase gedL (548 aa).

Residues Gly14, Ala17, and Glu47 each coordinate FAD. Residues Ser333 and Gly334 each contribute to the chloride site. Val335 is an FAD binding site.

The protein belongs to the flavin-dependent halogenase family.

It carries out the reaction sulochrin + 2 FADH2 + 2 chloride + 2 O2 = dihydrogeodin + 2 FAD + 4 H2O + H(+). It participates in secondary metabolite biosynthesis. Its function is as follows. Sulochrin halogenase; part of the gene cluster that mediates the biosynthesis of geodin, an intermediate in the biosynthesis of other natural products. The pathway begins with the synthesis of atrochrysone thioester by the polyketide synthase (PKS) gedC. The atrochrysone carboxyl ACP thioesterase gedB then breaks the thioester bond and releases the atrochrysone carboxylic acid from gedC. The atrochrysone carboxylic acid is then converted to atrochrysone which is further transformed into emodinanthrone. The next step is performed by the emodinanthrone oxygenase gedH that catalyzes the oxidation of emodinanthrone to emodin. Emodin O-methyltransferase encoded probably by gedA then catalyzes methylation of the 8-hydroxy group of emodin to form questin. Ring cleavage of questin by questin oxidase gedK leads to desmethylsulochrin via several intermediates including questin epoxide. Another methylation step probably catalyzed by methyltransferase gedG leads to the formation of sulochrin which is further converted to dihydrogeodin by the sulochrin halogenase gedL. Finally, the dihydrogeodin oxidase gedJ catalyzes the stereospecific phenol oxidative coupling reaction converting dihydrogeodin to geodin. The sequence is that of Sulochrin halogenase gedL from Aspergillus terreus (strain NIH 2624 / FGSC A1156).